The primary structure comprises 609 residues: Protein FRIGIDA (609 aa).

Positions methionine 1–proline 18 are enriched in low complexity. Residues methionine 1–glutamate 31 are disordered. Coiled coils occupy residues aspartate 60 to asparagine 97 and glutamine 409 to glutamate 440. Disordered stretches follow at residues arginine 454 to aspartate 488 and serine 587 to lysine 609. A compositionally biased stretch (basic and acidic residues) spans tyrosine 474 to aspartate 484. Positions leucine 594–lysine 609 are enriched in polar residues.

It belongs to the Frigida family. Homodimer. Component of the transcription activator complex FRI-C composed of FRI, FRL1, SUF4, FLX and FES1. Interacts (via N-terminus) with FRL1 and (via C-terminus) with FLX (via N-terminus), SUF4 (via C-terminus) and FES1 (via C-terminus). Interacts with ASHH2 and RIN1, a component of the SWR1 chromatin-remodeling complex. Interacts with CBP20, FIP1 and FIP2. Expressed in ovules, but not in stamens.

It localises to the nucleus speckle. Required for the regulation of flowering time in the late-flowering phenotype. Involved in the enrichment of a WDR5A-containing COMPASS-like complex at the 'FLOWERING LOCUS C' that trimethylates histone H3 'Lys-4', leading to FLC up-regulation and RNA levels increase. Variants with an early-flowering phenotype (Including cv. Columbia, cv. Landsberg Erecta and cv. Wassilewskija) show loss-of-function mutations of FRI. Able to delay flowering independently of FRL1 activity. Dispensable for the reactivation of FLC in early embryogenesis, but required to maintain high levels of FLC expression in later embryonic and vegetative development. Suppresses the repression of FLC by the autonomous pathway, but has no effect on the expression of the genes involved in this pathway. This Arabidopsis thaliana (Mouse-ear cress) protein is Protein FRIGIDA.